Here is a 226-residue protein sequence, read N- to C-terminus: Phosphoenolpyruvate guanylyltransferase (226 aa).

Phosphoenolpyruvate is bound by residues threonine 145, glycine 161, and serine 164.

Belongs to the CofC family.

It carries out the reaction phosphoenolpyruvate + GTP + H(+) = enolpyruvoyl-2-diphospho-5'-guanosine + diphosphate. It participates in cofactor biosynthesis; coenzyme F420 biosynthesis. In terms of biological role, guanylyltransferase that catalyzes the activation of phosphoenolpyruvate (PEP) as enolpyruvoyl-2-diphospho-5'-guanosine, via the condensation of PEP with GTP. It is involved in the biosynthesis of coenzyme F420, a hydride carrier cofactor. This Nocardia farcinica (strain IFM 10152) protein is Phosphoenolpyruvate guanylyltransferase.